Reading from the N-terminus, the 373-residue chain is Putative gustatory receptor 10b (373 aa).

Topologically, residues M1–R8 are cytoplasmic. The helical transmembrane segment at L9–N29 threads the bilayer. Topologically, residues P30 to S82 are extracellular. A helical transmembrane segment spans residues T83–F103. Topologically, residues E104–C132 are cytoplasmic. A helical membrane pass occupies residues L133–I153. At M154 to L170 the chain is on the extracellular side. The chain crosses the membrane as a helical span at residues Y171–L191. Topologically, residues N192–R230 are cytoplasmic. A helical membrane pass occupies residues M231 to I251. At Y252–K273 the chain is on the extracellular side. A helical transmembrane segment spans residues M274–I294. The Cytoplasmic segment spans residues C295–C350. The helical transmembrane segment at A351–I371 threads the bilayer. Topologically, residues P372–G373 are extracellular.

Belongs to the insect chemoreceptor superfamily. Gustatory receptor (GR) family. Gr10a subfamily.

The protein localises to the cell membrane. Functionally, probable gustatory receptor which mediates acceptance or avoidance behavior, depending on its substrates. The sequence is that of Putative gustatory receptor 10b (Gr10b) from Drosophila melanogaster (Fruit fly).